Here is a 421-residue protein sequence, read N- to C-terminus: Probable dual-specificity RNA methyltransferase RlmN (421 aa).

Residues methionine 1 to valine 23 are disordered. Glutamate 127 functions as the Proton acceptor in the catalytic mechanism. A Radical SAM core domain is found at tyrosine 133–arginine 372. A disulfide bridge connects residues cysteine 140 and cysteine 378. Residues cysteine 147, cysteine 151, and cysteine 154 each contribute to the [4Fe-4S] cluster site. S-adenosyl-L-methionine is bound by residues glycine 202–glutamate 203, serine 236, serine 259–histidine 261, and asparagine 335. Cysteine 378 acts as the S-methylcysteine intermediate in catalysis. Residues alanine 383–arginine 421 are disordered. A compositionally biased stretch (basic and acidic residues) spans glycine 387 to glutamate 396.

Belongs to the radical SAM superfamily. RlmN family. [4Fe-4S] cluster serves as cofactor.

The protein resides in the cytoplasm. The catalysed reaction is adenosine(2503) in 23S rRNA + 2 reduced [2Fe-2S]-[ferredoxin] + 2 S-adenosyl-L-methionine = 2-methyladenosine(2503) in 23S rRNA + 5'-deoxyadenosine + L-methionine + 2 oxidized [2Fe-2S]-[ferredoxin] + S-adenosyl-L-homocysteine. It carries out the reaction adenosine(37) in tRNA + 2 reduced [2Fe-2S]-[ferredoxin] + 2 S-adenosyl-L-methionine = 2-methyladenosine(37) in tRNA + 5'-deoxyadenosine + L-methionine + 2 oxidized [2Fe-2S]-[ferredoxin] + S-adenosyl-L-homocysteine. In terms of biological role, specifically methylates position 2 of adenine 2503 in 23S rRNA and position 2 of adenine 37 in tRNAs. The polypeptide is Probable dual-specificity RNA methyltransferase RlmN (Frankia casuarinae (strain DSM 45818 / CECT 9043 / HFP020203 / CcI3)).